The primary structure comprises 500 residues: MSSDKKTAQVVDEVEVALIGAGIMSATLGAMLRELEPSWTQMVFERLDGPALESSSPWNNAGTGHSALCELNYTPEKNGRIDISKALNINEKFQVSRQFWSHQLNNGILTDPKAFINPVPHVSFAQGSIQVDYLKRRFDALKDNHMFPNMQFSDDDATFQEKLPLMSQGRDFNSQKVAISWTDAGTDVNFGALAKQFFTAAKAAGTEIRYGHEVVDIKREGSKWRVVAKNLHTGDYQAVHAKFVFVGAGGYALDLLRKAGVREVSGFAGFPVSGLWLRSKNPELVKQHHAKVYGKAAVGAPPMSVPHLDTRVIDGEEGLLFGPYGGWSPKFLKKGSYLDLFKSIRPDNITSYLGVAAQEFGLTKYLVTEVLKDFDKRVETLKEYVPSADPADWETVIAGQRVQVIKPAGAPQFGSLEFGTTLINNPEGNIAGLLGASPGASITPAIMIELLERCFGENMIQWGDKIQEMIPSYGTKLSKDKKLYNEMWEYTQKTLQLESK.

This sequence belongs to the MQO family. It depends on FAD as a cofactor.

It carries out the reaction (S)-malate + a quinone = a quinol + oxaloacetate. The protein operates within carbohydrate metabolism; tricarboxylic acid cycle; oxaloacetate from (S)-malate (quinone route): step 1/1. This Corynebacterium aurimucosum (strain ATCC 700975 / DSM 44827 / CIP 107346 / CN-1) (Corynebacterium nigricans) protein is Probable malate:quinone oxidoreductase.